The chain runs to 144 residues: Ribonuclease VapC45 (144 aa).

2 residues coordinate Mg(2+): D7 and D102.

The protein belongs to the PINc/VapC protein family. Mg(2+) serves as cofactor.

Its function is as follows. Toxic component of a type II toxin-antitoxin (TA) system. An RNase. Its cognate antitoxin is VapB45. This chain is Ribonuclease VapC45, found in Mycobacterium tuberculosis (strain CDC 1551 / Oshkosh).